The following is a 459-amino-acid chain: Ribulose bisphosphate carboxylase large chain (459 aa).

Residues 1–2 (MS) constitute a propeptide that is removed on maturation. The residue at position 3 (P3) is an N-acetylproline. At K14 the chain carries N6,N6,N6-trimethyllysine. Substrate-binding residues include N123 and T173. Residue K175 is the Proton acceptor of the active site. A substrate-binding site is contributed by K177. K201, D203, and E204 together coordinate Mg(2+). N6-carboxylysine is present on K201. The active-site Proton acceptor is H294. Substrate is bound by residues R295, H327, and S379.

The protein belongs to the RuBisCO large chain family. Type I subfamily. Heterohexadecamer of 8 large chains and 8 small chains; disulfide-linked. The disulfide link is formed within the large subunit homodimers. Requires Mg(2+) as cofactor. Post-translationally, the disulfide bond which can form in the large chain dimeric partners within the hexadecamer appears to be associated with oxidative stress and protein turnover.

It localises to the plastid. It is found in the chloroplast. It catalyses the reaction 2 (2R)-3-phosphoglycerate + 2 H(+) = D-ribulose 1,5-bisphosphate + CO2 + H2O. The catalysed reaction is D-ribulose 1,5-bisphosphate + O2 = 2-phosphoglycolate + (2R)-3-phosphoglycerate + 2 H(+). Its function is as follows. RuBisCO catalyzes two reactions: the carboxylation of D-ribulose 1,5-bisphosphate, the primary event in carbon dioxide fixation, as well as the oxidative fragmentation of the pentose substrate in the photorespiration process. Both reactions occur simultaneously and in competition at the same active site. The protein is Ribulose bisphosphate carboxylase large chain of Streptopus lanceolatus (Rose twisted stalk).